A 161-amino-acid chain; its full sequence is uncharacterized protein (161 aa).

A run of 4 helical transmembrane segments spans residues 22–42 (LFFINVGLAAVAMLVAGVFGH), 43–63 (LTVGMFLGLGLLLGLLNALLV), 89–109 (LAIITILGLIIAYIFRPAGLG), and 110–130 (VVFGLAFFQVLLVATTALPVL). The tract at residues 141-161 (VATYSSNGQTGGSEGRSASDD) is disordered.

It to M.leprae ML1138.

The protein resides in the cell membrane. This is an uncharacterized protein from Mycobacterium bovis (strain ATCC BAA-935 / AF2122/97).